Reading from the N-terminus, the 1367-residue chain is Protein patched homolog 3 (1367 aa).

The Cytoplasmic portion of the chain corresponds to 1–97 (MSFPDEETDL…WLFRIGCFVQ (97 aa)). Residues 98–118 (RWAWSTIFISLFLYCLCLGGL) traverse the membrane as a helical segment. Residues 119 to 625 (RHVTIETDLV…IADMLEEFSQ (507 aa)) lie on the Extracellular side of the membrane. Residues Asn235, Asn310, Asn454, and Asn591 are each glycosylated (N-linked (GlcNAc...) asparagine). A helical membrane pass occupies residues 626-646 (FNYIIIVIGYILMVIYAAFTQ). An SSD domain is found at 627-788 (NYIIIVIGYI…MFIFPAMIGI (162 aa)). Residues 647–659 (GRFQGWWLAVQSN) lie on the Cytoplasmic side of the membrane. The chain crosses the membrane as a helical span at residues 660-680 (VALAICGVILVTISSICGLGF). Residues 681–694 (ATHLGINFNAATTQ) are Extracellular-facing. A helical membrane pass occupies residues 695 to 715 (VVPFLSLGLGIDDMFLLLHNY). Residues 716 to 737 (DEIINICNKNEIGVLLKETGMS) are Cytoplasmic-facing. A helical membrane pass occupies residues 738 to 758 (VMLTSINNILAFISGYVLPIP). Over 759 to 767 (ALRSFCSQT) the chain is Extracellular. Residues 768–788 (AILLAFNLIFLMFIFPAMIGI) form a helical membrane-spanning segment. Topologically, residues 789–863 (DLRRQRKGKR…KIYIPALKNN (75 aa)) are cytoplasmic. A helical transmembrane segment spans residues 864-884 (VVKACVLIGTTTAVVFGLYGM). Over 885–1143 (YTSTLGLELA…WEQYLTLRWN (259 aa)) the chain is Extracellular. Residues 1144 to 1164 (LFQAICIIALAVFCVISILMF) traverse the membrane as a helical segment. The Cytoplasmic portion of the chain corresponds to 1165-1171 (NPWAATL). A helical transmembrane segment spans residues 1172 to 1192 (IMCIVVITTIELGGFMGLMGI). Topologically, residues 1193–1199 (KMNPISA) are extracellular. A helical membrane pass occupies residues 1200-1220 (VTLICAVGIGVEFTAHVELAF). The Cytoplasmic portion of the chain corresponds to 1221–1237 (LTALGTIDQRLESCLQH). Residues 1238-1258 (MFVPVYHGAISTFLGVVMLVF) form a helical membrane-spanning segment. At 1259 to 1273 (SEFDFVVTYFFYTMT) the chain is on the extracellular side. The chain crosses the membrane as a helical span at residues 1274–1294 (LLVALGVFNGLCVLPVILTLV). Topologically, residues 1295–1367 (GPKPELTPTD…SDDESSPAHK (73 aa)) are cytoplasmic. The interval 1302 to 1367 (PTDGSSVLPP…SDDESSPAHK (66 aa)) is disordered. The span at 1346–1356 (RDSPSTSSASH) shows a compositional bias: low complexity.

It belongs to the patched family. In terms of tissue distribution, in males, expressed in the precursor and mature sensory rays, the cloaca, and pre-anal ganglia and cephalic neurons. Also expressed in five cells in the valve region between the seminal vesicle and vas deferens of the somatic gonad.

It localises to the apical cell membrane. The protein resides in the cell junction. It is found in the adherens junction. Functionally, regulates osmosis during embryonic development. Required for larval development and in particular is involved in larval molting. The sequence is that of Protein patched homolog 3 from Caenorhabditis elegans.